Reading from the N-terminus, the 126-residue chain is uncharacterized protein (126 aa).

Disordered stretches follow at residues 15–72 (PEWG…SDPQ) and 93–126 (TQIP…TTSN). Composition is skewed to basic and acidic residues over residues 29-46 (DPLD…RVPE) and 55-64 (VQEDSREHGQ).

This is an uncharacterized protein from Homo sapiens (Human).